A 108-amino-acid polypeptide reads, in one-letter code: uncharacterized protein (108 aa).

Over residues 1–14 (MSDSNSRLVYSTET) the composition is skewed to polar residues. The disordered stretch occupies residues 1–31 (MSDSNSRLVYSTETGRIDEPKAAPVRPKGDG). Positions 15–31 (GRIDEPKAAPVRPKGDG) are enriched in basic and acidic residues.

The protein belongs to the SUI1 family.

This is an uncharacterized protein from Escherichia coli (strain K12).